We begin with the raw amino-acid sequence, 355 residues long: Methylthioribose-1-phosphate isomerase (355 aa).

Residues 53–55, R96, and Q205 each bind substrate; that span reads RGA. The Proton donor role is filled by D246. Residue 256-257 participates in substrate binding; it reads NK.

This sequence belongs to the eIF-2B alpha/beta/delta subunits family. MtnA subfamily.

It carries out the reaction 5-(methylsulfanyl)-alpha-D-ribose 1-phosphate = 5-(methylsulfanyl)-D-ribulose 1-phosphate. It functions in the pathway amino-acid biosynthesis; L-methionine biosynthesis via salvage pathway; L-methionine from S-methyl-5-thio-alpha-D-ribose 1-phosphate: step 1/6. In terms of biological role, catalyzes the interconversion of methylthioribose-1-phosphate (MTR-1-P) into methylthioribulose-1-phosphate (MTRu-1-P). This chain is Methylthioribose-1-phosphate isomerase, found in Thermosynechococcus vestitus (strain NIES-2133 / IAM M-273 / BP-1).